The chain runs to 83 residues: uncharacterized protein (83 aa).

The interval 40–65 (RMQAGASPDEDNDVNGETSFSRSFGG) is disordered. Polar residues predominate over residues 54–65 (NGETSFSRSFGG).

This is an uncharacterized protein from Dictyostelium discoideum (Social amoeba).